A 170-amino-acid chain; its full sequence is Adenine phosphoribosyltransferase (170 aa).

Belongs to the purine/pyrimidine phosphoribosyltransferase family. As to quaternary structure, homodimer.

Its subcellular location is the cytoplasm. It catalyses the reaction AMP + diphosphate = 5-phospho-alpha-D-ribose 1-diphosphate + adenine. It functions in the pathway purine metabolism; AMP biosynthesis via salvage pathway; AMP from adenine: step 1/1. Catalyzes a salvage reaction resulting in the formation of AMP, that is energically less costly than de novo synthesis. The protein is Adenine phosphoribosyltransferase of Prochlorococcus marinus (strain MIT 9312).